Here is a 251-residue protein sequence, read N- to C-terminus: Imidazole glycerol phosphate synthase subunit HisF (251 aa).

Catalysis depends on residues D11 and D130.

It belongs to the HisA/HisF family. Heterodimer of HisH and HisF.

Its subcellular location is the cytoplasm. The catalysed reaction is 5-[(5-phospho-1-deoxy-D-ribulos-1-ylimino)methylamino]-1-(5-phospho-beta-D-ribosyl)imidazole-4-carboxamide + L-glutamine = D-erythro-1-(imidazol-4-yl)glycerol 3-phosphate + 5-amino-1-(5-phospho-beta-D-ribosyl)imidazole-4-carboxamide + L-glutamate + H(+). Its pathway is amino-acid biosynthesis; L-histidine biosynthesis; L-histidine from 5-phospho-alpha-D-ribose 1-diphosphate: step 5/9. IGPS catalyzes the conversion of PRFAR and glutamine to IGP, AICAR and glutamate. The HisF subunit catalyzes the cyclization activity that produces IGP and AICAR from PRFAR using the ammonia provided by the HisH subunit. The sequence is that of Imidazole glycerol phosphate synthase subunit HisF from Pelagibacter ubique (strain HTCC1062).